The primary structure comprises 366 residues: uncharacterized protein (366 aa).

Residues 199–267 form a disordered region; sequence QKKQIEDEEK…QLKDAQAKRD (69 aa).

This is an uncharacterized protein from Haemophilus influenzae (strain ATCC 51907 / DSM 11121 / KW20 / Rd).